A 316-amino-acid chain; its full sequence is M-phase inducer phosphatase cdc-25.3 (316 aa).

Residues 35-65 (QNRQHSSAISHISNSSPPTRKRSIDGGYTSG) are disordered. Residues 39 to 50 (HSSAISHISNSS) show a composition bias toward low complexity. Positions 136–242 (FMQKYILIDC…FYAFTRGLEK (107 aa)) constitute a Rhodanese domain.

It belongs to the MPI phosphatase family.

The catalysed reaction is O-phospho-L-tyrosyl-[protein] + H2O = L-tyrosyl-[protein] + phosphate. The protein is M-phase inducer phosphatase cdc-25.3 (cdc-25.3) of Caenorhabditis elegans.